The following is a 491-amino-acid chain: Ketol-acid reductoisomerase (NADP(+)) (491 aa).

Residues 15 to 208 (AQLGKCRFMG…GGHRAGVLES (194 aa)) enclose the KARI N-terminal Rossmann domain. NADP(+)-binding positions include 45-48 (CGAQ), Arg68, Arg76, Ser78, and 108-110 (DKQ). Residue His132 is part of the active site. Gly158 provides a ligand contact to NADP(+). KARI C-terminal knotted domains follow at residues 209–344 (SFVA…TAPQ) and 345–484 (YEGK…MTDM). Residues Asp217, Glu221, Glu389, and Glu393 each coordinate Mg(2+). Ser414 contributes to the substrate binding site.

It belongs to the ketol-acid reductoisomerase family. It depends on Mg(2+) as a cofactor.

It carries out the reaction (2R)-2,3-dihydroxy-3-methylbutanoate + NADP(+) = (2S)-2-acetolactate + NADPH + H(+). The enzyme catalyses (2R,3R)-2,3-dihydroxy-3-methylpentanoate + NADP(+) = (S)-2-ethyl-2-hydroxy-3-oxobutanoate + NADPH + H(+). Its pathway is amino-acid biosynthesis; L-isoleucine biosynthesis; L-isoleucine from 2-oxobutanoate: step 2/4. It functions in the pathway amino-acid biosynthesis; L-valine biosynthesis; L-valine from pyruvate: step 2/4. Its function is as follows. Involved in the biosynthesis of branched-chain amino acids (BCAA). Catalyzes an alkyl-migration followed by a ketol-acid reduction of (S)-2-acetolactate (S2AL) to yield (R)-2,3-dihydroxy-isovalerate. In the isomerase reaction, S2AL is rearranged via a Mg-dependent methyl migration to produce 3-hydroxy-3-methyl-2-ketobutyrate (HMKB). In the reductase reaction, this 2-ketoacid undergoes a metal-dependent reduction by NADPH to yield (R)-2,3-dihydroxy-isovalerate. In Escherichia coli O6:K15:H31 (strain 536 / UPEC), this protein is Ketol-acid reductoisomerase (NADP(+)).